The sequence spans 306 residues: Deoxyribokinase (306 aa).

Residues 10 to 12, 38 to 42, and Glu139 contribute to the substrate site; these read MVD and GKGAN. Residues Asn184 and 220–225 contribute to the ATP site; that span reads TMGEKG. K(+) is bound by residues Asp246 and Ser248. 251 to 252 is an ATP binding site; it reads GD. Position 252 (Asp252) interacts with substrate. Asp252 serves as the catalytic Proton acceptor. K(+)-binding residues include Ser282, Gly285, Gly287, and Ser291.

The protein belongs to the carbohydrate kinase PfkB family. Deoxyribokinase subfamily. Homodimer. It depends on Mg(2+) as a cofactor.

It localises to the cytoplasm. The catalysed reaction is 2-deoxy-D-ribose + ATP = 2-deoxy-D-ribose 5-phosphate + ADP + H(+). Functionally, catalyzes the ATP-dependent phosphorylation of 2-deoxy-D-ribose to 2-deoxy-D-ribose 5-phosphate (dRib-5P), allowing the use of deoxyribose as the sole carbon source. Can also use D-ribose, with much lower efficiency. The chain is Deoxyribokinase from Salmonella typhi.